A 143-amino-acid polypeptide reads, in one-letter code: Probable FAD-linked sulfhydryl oxidase R368 (143 aa).

The 95-residue stretch at 10–104 (GWTFSHAVAL…YPEAIEAIEK (95 aa)) folds into the ERV/ALR sulfhydryl oxidase domain. Residues C46 and C49 are joined by a disulfide bond. A helical transmembrane segment spans residues 117 to 137 (FFIILIIIGIIVIIYLMYIVF).

It depends on FAD as a cofactor.

It is found in the membrane. It carries out the reaction 2 R'C(R)SH + O2 = R'C(R)S-S(R)CR' + H2O2. Its function is as follows. FAD-dependent sulfhydryl oxidase that catalyzes disulfide bond formation. The protein is Probable FAD-linked sulfhydryl oxidase R368 of Acanthamoeba polyphaga mimivirus (APMV).